The sequence spans 471 residues: Adenosylhomocysteinase (471 aa).

Residues Thr60, Asp135, and Glu196 each contribute to the substrate site. 197–199 (TTT) is a binding site for NAD(+). 2 residues coordinate substrate: Lys226 and Asp230. NAD(+)-binding positions include Asn231, 260–265 (GYGDVG), Glu283, Asn318, 339–341 (IGH), and Asn387.

Belongs to the adenosylhomocysteinase family. NAD(+) serves as cofactor.

It localises to the cytoplasm. It catalyses the reaction S-adenosyl-L-homocysteine + H2O = L-homocysteine + adenosine. It functions in the pathway amino-acid biosynthesis; L-homocysteine biosynthesis; L-homocysteine from S-adenosyl-L-homocysteine: step 1/1. May play a key role in the regulation of the intracellular concentration of adenosylhomocysteine. In Chlorobium phaeovibrioides (strain DSM 265 / 1930) (Prosthecochloris vibrioformis (strain DSM 265)), this protein is Adenosylhomocysteinase.